Here is a 204-residue protein sequence, read N- to C-terminus: Large ribosomal subunit protein bL25 (204 aa).

Belongs to the bacterial ribosomal protein bL25 family. CTC subfamily. As to quaternary structure, part of the 50S ribosomal subunit; part of the 5S rRNA/L5/L18/L25 subcomplex. Contacts the 5S rRNA. Binds to the 5S rRNA independently of L5 and L18.

In terms of biological role, this is one of the proteins that binds to the 5S RNA in the ribosome where it forms part of the central protuberance. The polypeptide is Large ribosomal subunit protein bL25 (Pseudomonas paraeruginosa (strain DSM 24068 / PA7) (Pseudomonas aeruginosa (strain PA7))).